Reading from the N-terminus, the 151-residue chain is Deoxyuridine 5'-triphosphate nucleotidohydrolase (151 aa).

Residues 70–72, asparagine 83, 87–89, and methionine 97 each bind substrate; these read RSG and LID.

This sequence belongs to the dUTPase family. It depends on Mg(2+) as a cofactor.

It catalyses the reaction dUTP + H2O = dUMP + diphosphate + H(+). It functions in the pathway pyrimidine metabolism; dUMP biosynthesis; dUMP from dCTP (dUTP route): step 2/2. Its function is as follows. This enzyme is involved in nucleotide metabolism: it produces dUMP, the immediate precursor of thymidine nucleotides and it decreases the intracellular concentration of dUTP so that uracil cannot be incorporated into DNA. This is Deoxyuridine 5'-triphosphate nucleotidohydrolase from Pseudomonas syringae pv. tomato (strain ATCC BAA-871 / DC3000).